The chain runs to 107 residues: SH3 domain-binding glutamic acid-rich-like protein 2 (107 aa).

The SH3-binding signature appears at 61-67; that stretch reads QGNPLPP.

Belongs to the SH3BGR family.

It localises to the nucleus. This Pongo abelii (Sumatran orangutan) protein is SH3 domain-binding glutamic acid-rich-like protein 2 (SH3BGRL2).